We begin with the raw amino-acid sequence, 372 residues long: Carbamoyl phosphate synthase small chain (372 aa).

A CPSase region spans residues 1–184 (MKAYIYLEND…SFQKFNDAKR (184 aa)). L-glutamine-binding residues include S45, G240, and G242. In terms of domain architecture, Glutamine amidotransferase type-1 spans 188–372 (KVAVIDYGVK…YIFKEFMNLM (185 aa)). The active-site Nucleophile is C268. L-glutamine contacts are provided by L269, Q272, N310, and Y313. Catalysis depends on residues H351 and E353.

It belongs to the CarA family. As to quaternary structure, composed of two chains; the small (or glutamine) chain promotes the hydrolysis of glutamine to ammonia, which is used by the large (or ammonia) chain to synthesize carbamoyl phosphate. Tetramer of heterodimers (alpha,beta)4.

The enzyme catalyses hydrogencarbonate + L-glutamine + 2 ATP + H2O = carbamoyl phosphate + L-glutamate + 2 ADP + phosphate + 2 H(+). It catalyses the reaction L-glutamine + H2O = L-glutamate + NH4(+). The protein operates within amino-acid biosynthesis; L-arginine biosynthesis; carbamoyl phosphate from bicarbonate: step 1/1. It participates in pyrimidine metabolism; UMP biosynthesis via de novo pathway; (S)-dihydroorotate from bicarbonate: step 1/3. Small subunit of the glutamine-dependent carbamoyl phosphate synthetase (CPSase). CPSase catalyzes the formation of carbamoyl phosphate from the ammonia moiety of glutamine, carbonate, and phosphate donated by ATP, constituting the first step of 2 biosynthetic pathways, one leading to arginine and/or urea and the other to pyrimidine nucleotides. The small subunit (glutamine amidotransferase) binds and cleaves glutamine to supply the large subunit with the substrate ammonia. This chain is Carbamoyl phosphate synthase small chain, found in Campylobacter jejuni subsp. jejuni serotype O:2 (strain ATCC 700819 / NCTC 11168).